Reading from the N-terminus, the 688-residue chain is Lectin-domain containing receptor kinase VI.3 (688 aa).

Residues 1–14 (MLVLFLLLTIPTRA) form the signal peptide. At 15–306 (QRTTTETPKT…KRGYNSQVLA (292 aa)) the chain is on the extracellular side. Residues 22 to 271 (PKTEFIFRGF…AHYVMGWSFS (250 aa)) are legume-lectin like. A helical transmembrane segment spans residues 307 to 327 (LIVALSGVTVILLALLFFFVM). Over 328-688 (YKKRLQQGEV…VSSSSVISGR (361 aa)) the chain is Cytoplasmic. One can recognise a Protein kinase domain in the interval 361-640 (FKENRIVGTG…LNGDDDVPEI (280 aa)). ATP is bound by residues 367-375 (VGTGGFGTV) and Lys391. Asp490 serves as the catalytic Proton acceptor. The segment at 662–688 (VSSDRASSSVPSFSVTRVSSSSVISGR) is disordered.

This sequence in the C-terminal section; belongs to the protein kinase superfamily. Ser/Thr protein kinase family. In the N-terminal section; belongs to the leguminous lectin family.

The protein localises to the cell membrane. The catalysed reaction is L-seryl-[protein] + ATP = O-phospho-L-seryl-[protein] + ADP + H(+). The enzyme catalyses L-threonyl-[protein] + ATP = O-phospho-L-threonyl-[protein] + ADP + H(+). Its function is as follows. Involved in negative regulation of abscisic acid response in seed germination. The chain is Lectin-domain containing receptor kinase VI.3 (LECRK63) from Arabidopsis thaliana (Mouse-ear cress).